A 375-amino-acid polypeptide reads, in one-letter code: MTPILFVDRDGTLIVEPADYQIDAYEKLRLVDHVIPAMLKLRDAGYQFVIVSNQDGLGSESYPRASFDGPNNLMLQIFASQGIEFREVLIDCSWPADNAPTRKPGIGLMVPYLQDRTIDWARSAMVGDRITDIQFAQNLNIRGFQLRTDEFGGEWDWSGIAHELADAPRRALVQRNTKETRIRVELDLDRVAEPKTATGLPFFDHMLEQIGKHGGFALEIRAEGDLHIDEHHTIEDTGLALGQALREALGDKRGIGRYGFDPESSPWRVAGDTPQHGFTLPMDETIASAALDFSGRPYFVFEGEFKRERVGDMPTELVPHFFRSICDASGLNLHLTVRGENDHHKVEACFKALARALRQAIRREGTALPTTKGTL.

Positions 1–168 (MTPILFVDRD…GIAHELADAP (168 aa)) are histidinol-phosphatase. Asp-8 (nucleophile) is an active-site residue. The Mg(2+) site is built by Asp-8, Asp-10, and Asp-128. Asp-10 serves as the catalytic Proton donor. The segment at 169–375 (RRALVQRNTK…TALPTTKGTL (207 aa)) is imidazoleglycerol-phosphate dehydratase.

This sequence in the N-terminal section; belongs to the histidinol-phosphatase family. It in the C-terminal section; belongs to the imidazoleglycerol-phosphate dehydratase family. Requires Mg(2+) as cofactor.

Its subcellular location is the cytoplasm. The catalysed reaction is D-erythro-1-(imidazol-4-yl)glycerol 3-phosphate = 3-(imidazol-4-yl)-2-oxopropyl phosphate + H2O. The enzyme catalyses L-histidinol phosphate + H2O = L-histidinol + phosphate. It functions in the pathway amino-acid biosynthesis; L-histidine biosynthesis; L-histidine from 5-phospho-alpha-D-ribose 1-diphosphate: step 6/9. It participates in amino-acid biosynthesis; L-histidine biosynthesis; L-histidine from 5-phospho-alpha-D-ribose 1-diphosphate: step 8/9. The sequence is that of Histidine biosynthesis bifunctional protein HisB from Xanthomonas axonopodis pv. citri (strain 306).